The primary structure comprises 255 residues: Type III pantothenate kinase (255 aa).

ATP is bound at residue 6–13 (DVGNTNIV). Substrate contacts are provided by residues tyrosine 100 and 107–110 (GADR). The active-site Proton acceptor is aspartate 109. Aspartate 129 contacts K(+). An ATP-binding site is contributed by threonine 132. Threonine 184 contacts substrate.

It belongs to the type III pantothenate kinase family. As to quaternary structure, homodimer. NH4(+) is required as a cofactor. The cofactor is K(+).

It localises to the cytoplasm. The enzyme catalyses (R)-pantothenate + ATP = (R)-4'-phosphopantothenate + ADP + H(+). It functions in the pathway cofactor biosynthesis; coenzyme A biosynthesis; CoA from (R)-pantothenate: step 1/5. In terms of biological role, catalyzes the phosphorylation of pantothenate (Pan), the first step in CoA biosynthesis. This is Type III pantothenate kinase from Geobacter sulfurreducens (strain ATCC 51573 / DSM 12127 / PCA).